We begin with the raw amino-acid sequence, 263 residues long: Trans-aconitate 2-methyltransferase (263 aa).

Belongs to the methyltransferase superfamily. Tam family.

It is found in the cytoplasm. It carries out the reaction trans-aconitate + S-adenosyl-L-methionine = (E)-3-(methoxycarbonyl)pent-2-enedioate + S-adenosyl-L-homocysteine. In terms of biological role, catalyzes the S-adenosylmethionine monomethyl esterification of trans-aconitate. This is Trans-aconitate 2-methyltransferase from Mycobacterium ulcerans (strain Agy99).